A 602-amino-acid chain; its full sequence is UvrABC system protein C (602 aa).

A GIY-YIG domain is found at 15-100 (DQSGVYHYFD…IKQLKPKYNI (86 aa)). The 36-residue stretch at 206–241 (SKLISRLKERMEKLAENLRFEEAGELRDRIEKIKRI) folds into the UVR domain.

Belongs to the UvrC family. Interacts with UvrB in an incision complex.

It is found in the cytoplasm. Functionally, the UvrABC repair system catalyzes the recognition and processing of DNA lesions. UvrC both incises the 5' and 3' sides of the lesion. The N-terminal half is responsible for the 3' incision and the C-terminal half is responsible for the 5' incision. The sequence is that of UvrABC system protein C from Wolinella succinogenes (strain ATCC 29543 / DSM 1740 / CCUG 13145 / JCM 31913 / LMG 7466 / NCTC 11488 / FDC 602W) (Vibrio succinogenes).